Reading from the N-terminus, the 395-residue chain is Type III polyketide synthase A (395 aa).

A CoA-binding site is contributed by K63–T70. The active-site Nucleophile is the C172. G224 to D225 contributes to the substrate binding site. CoA contacts are provided by residues L274, G314 to A317, and A317.

It belongs to the thiolase-like superfamily. Chalcone/stilbene synthases family. In terms of assembly, homodimer. Interacts with 4CLL1/ACOS5 and TKPR1. As to expression, expressed in flowers and flower buds (at protein level), and, at very low levels, in roots, seedlings, leaves and stems. Mostly confined to anther tapetal cells.

It is found in the endoplasmic reticulum. It functions in the pathway secondary metabolite biosynthesis; flavonoid biosynthesis. Plant type III polyketide synthases (PKSs) that catalyzes the condensation of malonyl-CoA units with various CoA ester starter molecules to generate a diverse array of natural products including long-chain alkyl alpha-pyrones. Accepts up to C(20) chain-length fatty acyl CoAs as starter substrates, and carries out sequential condensations with malonyl-CoA to produce triketide and tetraketide alpha-pyrones, potential sporopollenin precursors. Favorite substrates for are midchain- and v-hydroxylated fatty acyl-CoAs (e.g. 12-hydroxyoctadecanoyl-CoA and 16-hydroxyhexadecanoyl-CoA). Required for pollen development and sporopollenin biosynthesis, the major constituent of exine in the outer pollen wall. In vitro, can use 4-coumaroyl-coenzyme A as substrate to produce bis-noryangonin and fatty acyl-coenzyme A as substrate to produce medium-chain alkyl pyrones. May play a role in both the synthesis of pollen fatty acids and phenolics found in exine. The sequence is that of Type III polyketide synthase A from Arabidopsis thaliana (Mouse-ear cress).